We begin with the raw amino-acid sequence, 156 residues long: SCP2 sterol-binding domain-containing protein 1 (156 aa).

Positions 44-156 constitute an SCP2 domain; that stretch reads SFPVFQDIRL…ERVFKDWAKF (113 aa).

This Homo sapiens (Human) protein is SCP2 sterol-binding domain-containing protein 1 (SCP2D1).